Reading from the N-terminus, the 138-residue chain is Acidic phospholipase A2 BmooPLA2 (138 aa).

Positions 1–16 (MRTLWIVAVLLLGVEG) are cleaved as a signal peptide. Intrachain disulfides connect cysteine 42–cysteine 131, cysteine 44–cysteine 60, cysteine 59–cysteine 111, cysteine 65–cysteine 138, cysteine 66–cysteine 104, cysteine 73–cysteine 97, and cysteine 91–cysteine 102. Ca(2+) contacts are provided by tyrosine 43, glycine 45, and glycine 47. The active site involves histidine 63. Aspartate 64 serves as a coordination point for Ca(2+). The active site involves aspartate 105.

The protein belongs to the phospholipase A2 family. Group II subfamily. D49 sub-subfamily. Ca(2+) serves as cofactor. In terms of tissue distribution, expressed by the venom gland.

The protein localises to the secreted. The catalysed reaction is a 1,2-diacyl-sn-glycero-3-phosphocholine + H2O = a 1-acyl-sn-glycero-3-phosphocholine + a fatty acid + H(+). Functionally, snake venom phospholipase A2 (PLA2) that inhibits ADP- and collagen-induced platelet aggregation, has edema-inducing, anti-coagulant activity, antibacterial activity, and cytotoxic activity. In vivo, has a hypotensive effect. PLA2 catalyzes the calcium-dependent hydrolysis of the 2-acyl groups in 3-sn-phosphoglycerides. The polypeptide is Acidic phospholipase A2 BmooPLA2 (Bothrops moojeni (Lance-headed viper)).